Here is a 562-residue protein sequence, read N- to C-terminus: Nucleoprotein (562 aa).

The segment at 54–237 (LRKTKRTDGD…ITKDESAINI (184 aa)) is binding site for the cap structure m7GTP. Mn(2+) is bound by residues Asp381 and Glu383. 4 residues coordinate Zn(2+): Glu391, Cys498, His501, and Cys523. Position 527 (Asp527) interacts with Mn(2+).

Belongs to the arenaviridae nucleocapsid protein family. In terms of assembly, homomultimerizes to form the nucleocapsid. Binds to viral genomic RNA. Interacts with glycoprotein G2. Interacts with protein Z; this interaction probably directs the encapsidated genome to budding sites. Interacts with protein L; this interaction does not interfere with Z-L interaction. Interacts with host IKBKE (via Protein kinase domain); the interaction inhibits IKBKE kinase activity.

Its subcellular location is the virion. The protein localises to the host cytoplasm. In terms of biological role, encapsidates the genome, protecting it from nucleases. The encapsidated genomic RNA is termed the nucleocapsid (NC). Serves as template for viral transcription and replication. The increased presence of protein N in host cell does not seem to trigger the switch from transcription to replication as observed in other negative strain RNA viruses. Through the interaction with host IKBKE, strongly inhibits the phosphorylation and nuclear translocation of host IRF3, a protein involved in interferon activation pathway, leading to the inhibition of interferon-beta and IRF3-dependent promoters activation. Also encodes a functional 3'-5' exoribonuclease that degrades preferentially dsRNA substrates and thereby participates in the suppression of interferon induction. The protein is Nucleoprotein of Homo sapiens (Human).